The primary structure comprises 232 residues: Phosphatidylserine decarboxylase proenzyme (232 aa).

Residue serine 190 is the Schiff-base intermediate with substrate; via pyruvic acid of the active site. At serine 190 the chain carries Pyruvic acid (Ser); by autocatalysis.

Belongs to the phosphatidylserine decarboxylase family. PSD-A subfamily. As to quaternary structure, heterodimer of a large membrane-associated beta subunit and a small pyruvoyl-containing alpha subunit. Requires pyruvate as cofactor. In terms of processing, is synthesized initially as an inactive proenzyme. Formation of the active enzyme involves a self-maturation process in which the active site pyruvoyl group is generated from an internal serine residue via an autocatalytic post-translational modification. Two non-identical subunits are generated from the proenzyme in this reaction, and the pyruvate is formed at the N-terminus of the alpha chain, which is derived from the carboxyl end of the proenzyme. The post-translation cleavage follows an unusual pathway, termed non-hydrolytic serinolysis, in which the side chain hydroxyl group of the serine supplies its oxygen atom to form the C-terminus of the beta chain, while the remainder of the serine residue undergoes an oxidative deamination to produce ammonia and the pyruvoyl prosthetic group on the alpha chain.

It is found in the cell membrane. The catalysed reaction is a 1,2-diacyl-sn-glycero-3-phospho-L-serine + H(+) = a 1,2-diacyl-sn-glycero-3-phosphoethanolamine + CO2. It participates in phospholipid metabolism; phosphatidylethanolamine biosynthesis; phosphatidylethanolamine from CDP-diacylglycerol: step 2/2. Catalyzes the formation of phosphatidylethanolamine (PtdEtn) from phosphatidylserine (PtdSer). The sequence is that of Phosphatidylserine decarboxylase proenzyme from Cereibacter sphaeroides (strain ATCC 17023 / DSM 158 / JCM 6121 / CCUG 31486 / LMG 2827 / NBRC 12203 / NCIMB 8253 / ATH 2.4.1.) (Rhodobacter sphaeroides).